The chain runs to 130 residues: Histone H2A type 1-E (130 aa).

The interval 1-22 is disordered; it reads MSGRGKQGGKARAKAKTRSSRA. Ser2 is subject to N-acetylserine. A Phosphoserine; by RPS6KA5 modification is found at Ser2. The residue at position 4 (Arg4) is a Citrulline; alternate. Residue Arg4 is modified to Symmetric dimethylarginine; by PRMT5; alternate. Residues Lys6 and Lys10 each carry the N6-(2-hydroxyisobutyryl)lysine; alternate modification. Residue Lys6 is modified to N6-acetyllysine; alternate. Basic residues predominate over residues 7 to 19; it reads QGGKARAKAKTRS. Lys10 carries the post-translational modification N6-lactoyllysine; alternate. Lys10 bears the N6-succinyllysine; alternate mark. Residues Lys14 and Lys16 each participate in a glycyl lysine isopeptide (Lys-Gly) (interchain with G-Cter in ubiquitin) cross-link. Residue Lys37 is modified to N6-(2-hydroxyisobutyryl)lysine; alternate. An N6-(beta-hydroxybutyryl)lysine; alternate modification is found at Lys37. Lys37 is modified (N6-crotonyllysine; alternate). N6-(2-hydroxyisobutyryl)lysine is present on residues Lys75 and Lys76. At Lys96 the chain carries N6-(2-hydroxyisobutyryl)lysine; alternate. Position 96 is an N6-succinyllysine; alternate (Lys96). Position 96 is an N6-glutaryllysine; alternate (Lys96). The residue at position 105 (Gln105) is an N5-methylglutamine. Lys119 carries the N6-(2-hydroxyisobutyryl)lysine; alternate modification. Residues Lys119 and Lys120 each carry the N6-crotonyllysine; alternate modification. Residues Lys119 and Lys120 each carry the N6-glutaryllysine; alternate modification. A Glycyl lysine isopeptide (Lys-Gly) (interchain with G-Cter in ubiquitin); alternate cross-link involves residue Lys120. Residue Thr121 is modified to Phosphothreonine; by DCAF1. Residue Lys126 is modified to N6-crotonyllysine; alternate. The residue at position 126 (Lys126) is an N6-glutaryllysine; alternate.

It belongs to the histone H2A family. As to quaternary structure, the nucleosome is a histone octamer containing two molecules each of H2A, H2B, H3 and H4 assembled in one H3-H4 heterotetramer and two H2A-H2B heterodimers. The octamer wraps approximately 147 bp of DNA. Post-translationally, deiminated on Arg-4 in granulocytes upon calcium entry. Monoubiquitination of Lys-120 (H2AK119Ub) by RING1, TRIM37 and RNF2/RING2 complex gives a specific tag for epigenetic transcriptional repression and participates in X chromosome inactivation of female mammals. It is involved in the initiation of both imprinted and random X inactivation. Ubiquitinated H2A is enriched in inactive X chromosome chromatin. Ubiquitination of H2A functions downstream of methylation of 'Lys-27' of histone H3 (H3K27me). H2AK119Ub by RNF2/RING2 can also be induced by ultraviolet and may be involved in DNA repair. Following DNA double-strand breaks (DSBs), it is ubiquitinated through 'Lys-63' linkage of ubiquitin moieties by the E2 ligase UBE2N and the E3 ligases RNF8 and RNF168, leading to the recruitment of repair proteins to sites of DNA damage. Ubiquitination at Lys-14 and Lys-16 (H2AK13Ub and H2AK15Ub, respectively) in response to DNA damage is initiated by RNF168 that mediates monoubiquitination at these 2 sites, and 'Lys-63'-linked ubiquitin are then conjugated to monoubiquitin; RNF8 is able to extend 'Lys-63'-linked ubiquitin chains in vitro. H2AK119Ub and ionizing radiation-induced 'Lys-63'-linked ubiquitination (H2AK13Ub and H2AK15Ub) are distinct events. In terms of processing, phosphorylation on Ser-2 (H2AS1ph) is enhanced during mitosis. Phosphorylation on Ser-2 by RPS6KA5/MSK1 directly represses transcription. Acetylation of H3 inhibits Ser-2 phosphorylation by RPS6KA5/MSK1. Phosphorylation at Thr-121 (H2AT120ph) by DCAF1 is present in the regulatory region of many tumor suppresor genes and down-regulates their transcription. Post-translationally, symmetric dimethylation on Arg-4 by the PRDM1/PRMT5 complex may play a crucial role in the germ-cell lineage. Glutamine methylation at Gln-105 (H2AQ104me) by FBL is specifically dedicated to polymerase I. It is present at 35S ribosomal DNA locus and impairs binding of the FACT complex. In terms of processing, crotonylation (Kcr) is specifically present in male germ cells and marks testis-specific genes in post-meiotic cells, including X-linked genes that escape sex chromosome inactivation in haploid cells. Crotonylation marks active promoters and enhancers and confers resistance to transcriptional repressors. It is also associated with post-meiotically activated genes on autosomes. Post-translationally, lactylated in macrophages by EP300/P300 by using lactoyl-CoA directly derived from endogenous or exogenous lactate, leading to stimulates gene transcription.

It localises to the nucleus. The protein resides in the chromosome. Functionally, core component of nucleosome. Nucleosomes wrap and compact DNA into chromatin, limiting DNA accessibility to the cellular machineries which require DNA as a template. Histones thereby play a central role in transcription regulation, DNA repair, DNA replication and chromosomal stability. DNA accessibility is regulated via a complex set of post-translational modifications of histones, also called histone code, and nucleosome remodeling. This is Histone H2A type 1-E from Rattus norvegicus (Rat).